A 265-amino-acid polypeptide reads, in one-letter code: Uridylate kinase (265 aa).

The interval 1–29 is disordered; the sequence is MTESREPHVAGSAAPRPEPANGLASGQPS. 40-43 serves as a coordination point for ATP; it reads KLGG. UMP is bound at residue Gly81. Positions 82 and 86 each coordinate ATP. UMP contacts are provided by residues Asp101 and 162 to 169; that span reads MGLPYFST. ATP contacts are provided by Phe195 and Asp198.

Belongs to the UMP kinase family. In terms of assembly, homohexamer.

Its subcellular location is the cytoplasm. The enzyme catalyses UMP + ATP = UDP + ADP. Its pathway is pyrimidine metabolism; CTP biosynthesis via de novo pathway; UDP from UMP (UMPK route): step 1/1. Its activity is regulated as follows. Inhibited by UTP. Functionally, catalyzes the reversible phosphorylation of UMP to UDP. The polypeptide is Uridylate kinase (Mycolicibacterium paratuberculosis (strain ATCC BAA-968 / K-10) (Mycobacterium paratuberculosis)).